Here is a 773-residue protein sequence, read N- to C-terminus: MASFGELSFLSEISNIHKSNKKHEIQSAGTVALDNGVESPYYICVQVENQGIEVYHMKDERLFASCPLPEKTRFSCSPIYIKEGNWHYIWTCTSLKSNGEWKILLWKFNDLEEESEVVYRDISNQQIFALHFISSTGQLVIVFRNGKIAFLDPEDDKVHMSASVNESATLLQSMYVPSQANPIDAVRLASNEASGTNNNPKEIEMNSDTTSSVPKSGSTSFSANVTSSTSMVYLLYSVHVDKIIQYYVDSFSVSERRLVNTRAVVLKEVQAPSHILMSKDSTSIYTISLEGLSIYSLHDESKSYMLIKILHFQSISKIEHIELISDNFLLIQHDSQLSLWDITFGTIQDVYDLKQKPTILTFTCYKSSLKKMNQNSQLTGYIAVLLKKGLAIVPYTLPIKMLLADAVGKRTSKIGKLRGTNELIGEGVLTKSKNGPSMRDQLLKNIQLQDHSLRDELISLRSLAEQKNTIEFDAKFLGVVERYQNQYANNCKILKTSSVLPIPFAHAIESLLFSLDEENELQVSCAASGTLNYLIRHRLFSYSTLVQKGFSGSVFDCLYKFQKDIAFNFLERTSDISAYEIACAIKTAINSSKVKLLRSALARLSLFDSTTSREALLLAFVPEDFDSLFKTLGNLVVDSNLASVKFNLETYIYCLSVVLDAMGVGGVASSSENLEAARILYNDLQEKLTNLTAMSLVLPAISEIVKRKKDVHAERVQFYANPQPKAIVDDMGDLATLLKKDFLSEKRKGKSQRARGKEIDMAIGKYTVERLEI.

Residues 192–219 are disordered; the sequence is EASGTNNNPKEIEMNSDTTSSVPKSGST.

It localises to the cytoplasm. This is an uncharacterized protein from Schizosaccharomyces pombe (strain 972 / ATCC 24843) (Fission yeast).